A 223-amino-acid polypeptide reads, in one-letter code: Protein-lysine N-methyltransferase CG9154 (223 aa).

It belongs to the class I-like SAM-binding methyltransferase superfamily. EFM5 family.

The protein localises to the cytoplasm. Functionally, S-adenosyl-L-methionine-dependent protein-lysine N-methyltransferase that methylates elongation factor 1-alpha. This is Protein-lysine N-methyltransferase CG9154 from Drosophila melanogaster (Fruit fly).